The primary structure comprises 377 residues: Pseudouridylate synthase RPUSD4, mitochondrial (377 aa).

The transit peptide at M1–G15 directs the protein to the mitochondrion. Positions A36–E62 form a coiled coil. D153 is an active-site residue.

It belongs to the pseudouridine synthase RluA family. In terms of assembly, interacts with 16S mt-rRNA, mt-tRNA(Phe) and mt-tRNA(Met). Forms a regulatory protein-RNA complex, consisting of RCC1L, NGRN, RPUSD3, RPUSD4, TRUB2, FASTKD2 and 16S mt-rRNA.

The protein localises to the mitochondrion matrix. The protein resides in the nucleus. It localises to the cytoplasm. The enzyme catalyses uridine in 5S rRNA = pseudouridine in 5S rRNA. The catalysed reaction is a uridine in tRNA = a pseudouridine in tRNA. It carries out the reaction a uridine in mRNA = a pseudouridine in mRNA. Catalyzes uridine to pseudouridine isomerization (pseudouridylation) of different mitochondrial RNA substrates. Acts on position 1397 in 16S mitochondrial ribosomal RNA (16S mt-rRNA). This modification is required for the assembly of 16S mt-rRNA into a functional mitochondrial ribosome. As a component of a functional protein-RNA module, consisting of RCC1L, NGRN, RPUSD3, RPUSD4, TRUB2, FASTKD2 and 16S mt-rRNA, controls 16S mt-rRNA abundance and is required for intra-mitochondrial translation. Acts on position 39 in mitochondrial tRNA(Phe). Also catalyzes pseudouridylation of mRNAs in nucleus: acts as a regulator of pre-mRNA splicing by mediating pseudouridylation of pre-mRNAs at locations associated with alternatively spliced regions. Pseudouridylation of pre-mRNAs near splice sites directly regulates mRNA splicing and mRNA 3'-end processing. The polypeptide is Pseudouridylate synthase RPUSD4, mitochondrial (Homo sapiens (Human)).